We begin with the raw amino-acid sequence, 144 residues long: Signal recognition particle 19 kDa protein (144 aa).

Residues threonine 117–lysine 144 form a disordered region.

The protein belongs to the SRP19 family. Component of a signal recognition particle complex that consists of a 7SL RNA molecule of 300 nucleotides and six protein subunits: SRP72, SRP68, SRP54, SRP19, SRP14 and SRP9. Interacts with IPO5, IPO7, IPO8, KPNB1 and TNPO1. Interactions with IPO8 and TNPO1 may be involved in SRP19 import into the nucleus.

It is found in the cytoplasm. The protein localises to the nucleus. Its subcellular location is the nucleolus. The protein resides in the nucleoplasm. Component of the signal recognition particle (SRP) complex, a ribonucleoprotein complex that mediates the cotranslational targeting of secretory and membrane proteins to the endoplasmic reticulum (ER). Binds directly to 7SL RNA. Mediates binding of SRP54 to the SRP complex. This chain is Signal recognition particle 19 kDa protein, found in Canis lupus familiaris (Dog).